The sequence spans 1589 residues: Polyhomeotic-proximal chromatin protein (1589 aa).

The segment covering 1-15 has biased composition (basic and acidic residues); it reads MDRRALKFMQKRADT. 5 disordered regions span residues 1–85, 107–174, 252–290, 1112–1244, and 1260–1294; these read MDRR…GGKQ, KYDV…NCNS, LQQQLSEANGGGAASAGAGGAASPANSQQSQQQQHSTAI, LSTA…STTT, and AVSTASTTTTSSGTFITSCTSTTTTTTSSISNGSK. Low complexity-rich tracts occupy residues 18-28, 60-80, and 119-139; these read DTTTPVSTTAS, NHNNNNSSQHSHSHQQQQQQQ, and AQQQATSGTGPATGSGSVTPT. Residues 154–174 show a composition bias toward polar residues; sequence HTPSTPNRPSAPSTPNTNCNS. Positions 260–271 are enriched in gly residues; the sequence is NGGGAASAGAGG. Low complexity predominate over residues 272–285; the sequence is AASPANSQQSQQQQ. A Phosphoserine modification is found at S1145. The residue at position 1148 (T1148) is a Phosphothreonine. A compositionally biased stretch (low complexity) spans 1157-1180; sequence TTPKSSTPATVSASVEASSSTGEA. The span at 1189 to 1221 shows a compositional bias: polar residues; sequence RSSTPSKGATTPTSKQSNAAVQPPSSTTPNSVS. Composition is skewed to low complexity over residues 1230–1244 and 1260–1290; these read TCGSLTSATSTSTTT and AVSTASTTTTSSGTFITSCTSTTTTTTSSIS. Residues 1356–1389 form an FCS-type zinc finger; sequence SAPGSDMVACEQCGKMEHKAKLKRKRYCSPGCSR. Zn(2+) contacts are provided by C1365, C1368, C1383, and C1387. One can recognise an SAM domain in the interval 1513–1577; the sequence is WSVDDVSNFI…VAKVESIKEV (65 aa).

As to quaternary structure, component of PRC1 complex, which contains many PcG proteins like Pc, ph, Scm, Psc, Sce and also chromatin-remodeling proteins such as histone deacetylases. This complex is distinct from the Esc/E(z) complex, at least composed of esc, E(z), Su(z)12, HDAC1/Rpd3 and Caf1-55. The 2 complexes however cooperate and interact together during the first 3 hours of development to establish PcG silencing. Interacts with the SAM domain of Scm via its SAM domain in vitro. Interacts with Trl in vivo and with corto in vitro. In terms of tissue distribution, salivary glands.

Its subcellular location is the nucleus. In terms of biological role, polycomb group (PcG) protein. PcG proteins act by forming multiprotein complexes, which are required to maintain the transcriptionally repressive state of homeotic genes throughout development. PcG proteins are not required to initiate repression, but to maintain it during later stages of development. Component of the PcG multiprotein PRC1 complex, a complex that acts via chromatin remodeling and modification of histones; it mediates monoubiquitination of histone H2A 'Lys-118', rendering chromatin heritably changed in its expressibility. Plays a role in regulating the expression of other pair-rule genes such as eve, ftz, and H. The polypeptide is Polyhomeotic-proximal chromatin protein (ph-p) (Drosophila melanogaster (Fruit fly)).